A 215-amino-acid polypeptide reads, in one-letter code: 3-demethoxyubiquinol 3-hydroxylase (215 aa).

The Fe cation site is built by glutamate 64, glutamate 94, histidine 97, glutamate 146, glutamate 178, and histidine 181.

The protein belongs to the COQ7 family. Fe cation serves as cofactor.

It is found in the cell membrane. It carries out the reaction a 5-methoxy-2-methyl-3-(all-trans-polyprenyl)benzene-1,4-diol + AH2 + O2 = a 3-demethylubiquinol + A + H2O. It participates in cofactor biosynthesis; ubiquinone biosynthesis. Catalyzes the hydroxylation of 2-nonaprenyl-3-methyl-6-methoxy-1,4-benzoquinol during ubiquinone biosynthesis. This chain is 3-demethoxyubiquinol 3-hydroxylase, found in Coxiella burnetii (strain CbuG_Q212) (Coxiella burnetii (strain Q212)).